We begin with the raw amino-acid sequence, 271 residues long: Mannosyl-3-phosphoglycerate phosphatase (271 aa).

The active-site Nucleophile is the D13. Residues D13, D15, and D214 each contribute to the Mg(2+) site.

This sequence belongs to the HAD-like hydrolase superfamily. MPGP family. The cofactor is Mg(2+).

The protein resides in the cytoplasm. The catalysed reaction is 2-O-(alpha-D-mannosyl)-3-phosphoglycerate + H2O = (2R)-2-O-(alpha-D-mannosyl)-glycerate + phosphate. This Escherichia coli O6:K15:H31 (strain 536 / UPEC) protein is Mannosyl-3-phosphoglycerate phosphatase (yedP).